The sequence spans 404 residues: Glucose-1-phosphate adenylyltransferase (404 aa).

Residues Tyr-99, Gly-164, 179–180 (EK), and Ser-197 each bind alpha-D-glucose 1-phosphate.

The protein belongs to the bacterial/plant glucose-1-phosphate adenylyltransferase family.

The enzyme catalyses alpha-D-glucose 1-phosphate + ATP + H(+) = ADP-alpha-D-glucose + diphosphate. Its pathway is capsule biogenesis; capsule polysaccharide biosynthesis. It participates in glycan biosynthesis; glycogen biosynthesis. In terms of biological role, involved in the biosynthesis of ADP-glucose, a building block, required in the biosynthesis of maltose-1-phosphate (M1P) and in the elongation reactions to produce linear alpha-1,4-glucans. Catalyzes the reaction between ATP and alpha-D-glucose 1-phosphate (G1P) to produce pyrophosphate and ADP-Glc. This is Glucose-1-phosphate adenylyltransferase from Mycobacterium ulcerans (strain Agy99).